The primary structure comprises 468 residues: 6-phosphogluconate dehydrogenase, decarboxylating (468 aa).

Residues 9-14 (GLAVMG), 32-34 (NRS), 73-75 (VQA), and Asn-101 contribute to the NADP(+) site. Substrate contacts are provided by residues Asn-101 and 127–129 (SGG). Residue Lys-182 is the Proton acceptor of the active site. 185-186 (HN) is a binding site for substrate. Residue Glu-189 is the Proton donor of the active site. Substrate contacts are provided by Tyr-190, Lys-259, Arg-286, Arg-444, and His-450.

The protein belongs to the 6-phosphogluconate dehydrogenase family. Homodimer.

It catalyses the reaction 6-phospho-D-gluconate + NADP(+) = D-ribulose 5-phosphate + CO2 + NADPH. It functions in the pathway carbohydrate degradation; pentose phosphate pathway; D-ribulose 5-phosphate from D-glucose 6-phosphate (oxidative stage): step 3/3. In terms of biological role, catalyzes the oxidative decarboxylation of 6-phosphogluconate to ribulose 5-phosphate and CO(2), with concomitant reduction of NADP to NADPH. The chain is 6-phosphogluconate dehydrogenase, decarboxylating (gnd) from Staphylococcus aureus (strain Mu50 / ATCC 700699).